Here is a 515-residue protein sequence, read N- to C-terminus: Probable cytochrome P450 6d4 (515 aa).

C457 is a binding site for heme.

The protein belongs to the cytochrome P450 family. The cofactor is heme.

It localises to the endoplasmic reticulum membrane. The protein resides in the microsome membrane. Functionally, may be involved in the metabolism of insect hormones and in the breakdown of synthetic insecticides. In Drosophila melanogaster (Fruit fly), this protein is Probable cytochrome P450 6d4 (Cyp6d4).